The primary structure comprises 92 residues: Large ribosomal subunit protein eL42 (92 aa).

Zn(2+) contacts are provided by C11, C14, C70, and C73. The C4-type zinc-finger motif lies at 11–73 (CPNCRKHTVH…LDLRLKCKEC (63 aa)).

The protein belongs to the eukaryotic ribosomal protein eL42 family. As to quaternary structure, part of the 50S ribosomal subunit. Zn(2+) serves as cofactor.

In terms of biological role, binds to the 23S rRNA. The polypeptide is Large ribosomal subunit protein eL42 (Methanothermobacter thermautotrophicus (strain ATCC 29096 / DSM 1053 / JCM 10044 / NBRC 100330 / Delta H) (Methanobacterium thermoautotrophicum)).